The following is a 152-amino-acid chain: UPF0336 protein Tfu_2666 (152 aa).

A MaoC-like domain is found at 7–116 (YLGRAYELPE…TTITDIKSLA (110 aa)).

This sequence belongs to the UPF0336 family.

This chain is UPF0336 protein Tfu_2666, found in Thermobifida fusca (strain YX).